The chain runs to 255 residues: Small ribosomal subunit protein uS2 (255 aa).

The interval 226 to 255 (QGVSNEEVAAEQNIDLDEKEKSEETEATEE) is disordered.

Belongs to the universal ribosomal protein uS2 family.

The sequence is that of Small ribosomal subunit protein uS2 from Staphylococcus aureus (strain Mu3 / ATCC 700698).